A 75-amino-acid polypeptide reads, in one-letter code: Anionic peptide (75 aa).

An N-terminal signal peptide occupies residues 1 to 24 (MVSKSLIVLLLVSVLVSTFYTSEA).

Belongs to the non-disulfide-bridged peptide (NDBP) superfamily. In terms of tissue distribution, expressed by the venom gland.

It is found in the secreted. The chain is Anionic peptide from Tityus discrepans (Venezuelan scorpion).